The sequence spans 141 residues: Protein stum homolog (141 aa).

Serine 26 is modified (phosphoserine). Helical transmembrane passes span 51 to 71 (FPVAVICLFLNTFVPGLGTFV) and 87 to 107 (RHVCCVFWLNIAAALIQVLTA).

The protein belongs to the SPEC3 family. Stum subfamily.

The protein localises to the membrane. This Mus musculus (Mouse) protein is Protein stum homolog.